The following is a 190-amino-acid chain: Ribosome hibernation promotion factor (190 aa).

Belongs to the HPF/YfiA ribosome-associated protein family. Long HPF subfamily. In terms of assembly, interacts with 100S ribosomes.

It is found in the cytoplasm. In terms of biological role, required for dimerization of active 70S ribosomes into 100S ribosomes in stationary phase; 100S ribosomes are translationally inactive and sometimes present during exponential growth. The chain is Ribosome hibernation promotion factor from Rhizobium meliloti (strain 1021) (Ensifer meliloti).